The sequence spans 523 residues: Putative F-box protein At1g30925 (523 aa).

The region spanning 4–44 (FPNDDLVYEILLRLPAKSVARCSCVSKLRRSILSRQDFTEL) is the F-box domain.

The polypeptide is Putative F-box protein At1g30925 (Arabidopsis thaliana (Mouse-ear cress)).